Here is a 367-residue protein sequence, read N- to C-terminus: DNA replication and repair protein RecF (367 aa).

30–37 (GANGSGKT) is a binding site for ATP.

Belongs to the RecF family.

It localises to the cytoplasm. Its function is as follows. The RecF protein is involved in DNA metabolism; it is required for DNA replication and normal SOS inducibility. RecF binds preferentially to single-stranded, linear DNA. It also seems to bind ATP. The chain is DNA replication and repair protein RecF from Pseudomonas syringae pv. tomato (strain ATCC BAA-871 / DC3000).